A 248-amino-acid chain; its full sequence is 2,3-bisphosphoglycerate-dependent phosphoglycerate mutase (248 aa).

Substrate-binding positions include 8–15 (RHGESTWN), 21–22 (TG), Arg-60, 87–90 (ERHY), Lys-98, 114–115 (RR), and 183–184 (GN). Catalysis depends on His-9, which acts as the Tele-phosphohistidine intermediate. Glu-87 (proton donor/acceptor) is an active-site residue.

This sequence belongs to the phosphoglycerate mutase family. BPG-dependent PGAM subfamily. As to quaternary structure, homodimer.

It catalyses the reaction (2R)-2-phosphoglycerate = (2R)-3-phosphoglycerate. It participates in carbohydrate degradation; glycolysis; pyruvate from D-glyceraldehyde 3-phosphate: step 3/5. In terms of biological role, catalyzes the interconversion of 2-phosphoglycerate and 3-phosphoglycerate. This Paraburkholderia phytofirmans (strain DSM 17436 / LMG 22146 / PsJN) (Burkholderia phytofirmans) protein is 2,3-bisphosphoglycerate-dependent phosphoglycerate mutase.